A 223-amino-acid chain; its full sequence is Protein UGX2 (223 aa).

Positions 78–95 are enriched in basic residues; the sequence is SNKRAKMKSKTKLTRTAK. Residues 78–117 are disordered; that stretch reads SNKRAKMKSKTKLTRTAKQRRESPVCERDESDEDNDSDHY. A compositionally biased stretch (basic and acidic residues) spans 96-105; that stretch reads QRRESPVCER.

The polypeptide is Protein UGX2 (UGX2) (Saccharomyces cerevisiae (strain ATCC 204508 / S288c) (Baker's yeast)).